Reading from the N-terminus, the 171-residue chain is Ribosome maturation factor RimP (171 aa).

The protein belongs to the RimP family.

It localises to the cytoplasm. Its function is as follows. Required for maturation of 30S ribosomal subunits. The chain is Ribosome maturation factor RimP from Anaeromyxobacter dehalogenans (strain 2CP-1 / ATCC BAA-258).